The chain runs to 151 residues: MNKTVLPTIDNLDHKWYVIDAEGQRLGRLATEVATILRGKNKPTFTPHMDTGDFVIIINAEKIEVTGRKREQKLYRRHSGRPGGMKEETFEKLQVRLPERIVESAVRGMLPKNSLGRKLFTKLKVYAGPSHPHAAQQPETLVINTIPAGAN.

This sequence belongs to the universal ribosomal protein uL13 family. As to quaternary structure, part of the 50S ribosomal subunit.

Its function is as follows. This protein is one of the early assembly proteins of the 50S ribosomal subunit, although it is not seen to bind rRNA by itself. It is important during the early stages of 50S assembly. The polypeptide is Large ribosomal subunit protein uL13 (Synechocystis sp. (strain ATCC 27184 / PCC 6803 / Kazusa)).